We begin with the raw amino-acid sequence, 274 residues long: Outer surface protein A (274 aa).

Positions 1–16 are cleaved as a signal peptide; it reads MKKYLLGIGLILALIA. Residue cysteine 17 is the site of N-palmitoyl cysteine attachment. Cysteine 17 carries the S-diacylglycerol cysteine lipid modification.

This sequence belongs to the OspA lipoprotein family.

The protein localises to the cell outer membrane. It localises to the cell surface. The sequence is that of Outer surface protein A from Borreliella burgdorferi (Lyme disease spirochete).